Here is an 85-residue protein sequence, read N- to C-terminus: UPF0386 protein RL2079 (85 aa).

This sequence belongs to the UPF0386 family.

The protein is UPF0386 protein RL2079 of Rhizobium johnstonii (strain DSM 114642 / LMG 32736 / 3841) (Rhizobium leguminosarum bv. viciae).